The primary structure comprises 230 residues: UPF0173 metal-dependent hydrolase Mbar_A3716 (230 aa).

This sequence belongs to the UPF0173 family.

The protein is UPF0173 metal-dependent hydrolase Mbar_A3716 of Methanosarcina barkeri (strain Fusaro / DSM 804).